The primary structure comprises 383 residues: Adaptive-response sensory kinase SasA (383 aa).

The Histidine kinase domain maps to 152–365; it reads MVAHELRTPL…CFTFTVPIWQ (214 aa). Histidine 155 is subject to Phosphohistidine; by autocatalysis.

As to quaternary structure, homooligomerizes. Interacts with KaiC. Participates in the KaiABC clock complex, whose core is composed of a KaiC homohexamer, 6 KaiB and up to 6 KaiA dimers. SasA and KaiB(fs) compete to bind to KaiC.

The enzyme catalyses ATP + protein L-histidine = ADP + protein N-phospho-L-histidine.. Functionally, member of the two-component regulatory system SasA/RpaA involved in genome-wide circadian gene expression. One of several clock output pathways. Participates in the Kai clock protein complex, the main circadian regulator in cyanobacteria, via its interaction with KaiC. KaiC enhances the autophosphorylation activity of SasA, which then transfers its phosphate group to RpaA to activate it. In addition to its output function, recruits fold-shifted KaiB (KaiB(fs)) to KaiC to cooperatively form the KaiB(6):KaiC(6) complex (independent of SasA kinase activity). Required for robustness of the circadian rhythm of gene expression and is involved in clock output, also required for adaptation to light/dark cycles. This chain is Adaptive-response sensory kinase SasA, found in Parasynechococcus marenigrum (strain WH8102).